The following is a 140-amino-acid chain: Ribonuclease P protein subunit p20 (140 aa).

The protein belongs to the histone-like Alba family. In terms of assembly, component of nuclear RNase P and RNase MRP complexes. RNase P consists of a catalytic RNA moiety and 10 different protein chains; POP1, POP4, POP5, POP7, RPP14, RPP21, RPP25, RPP30, RPP38 and RPP40. Within the RNase P complex, POP1, POP7 and RPP25 form the 'finger' subcomplex, POP5, RPP14, RPP40 and homodimeric RPP30 form the 'palm' subcomplex, and RPP21, POP4 and RPP38 form the 'wrist' subcomplex. All subunits of the RNase P complex interact with the catalytic RNA. Several subunits of RNase P are also part of the RNase MRP complex. RNase MRP consists of a catalytic RNA moiety and about 8 protein subunits; POP1, POP7, RPP25, RPP30, RPP38, RPP40 and possibly also POP4 and POP5. Interacts with SMN1. POP7 forms a heterodimer with RPP25 that binds to the P3 stem loop of the catalytic RNA.

Its subcellular location is the nucleus. The protein localises to the nucleolus. It localises to the cytoplasm. The protein resides in the cytoplasmic granule. Its function is as follows. Component of ribonuclease P, a ribonucleoprotein complex that generates mature tRNA molecules by cleaving their 5'-ends. Also a component of the MRP ribonuclease complex, which cleaves pre-rRNA sequences. The protein is Ribonuclease P protein subunit p20 (Pop7) of Mus musculus (Mouse).